A 321-amino-acid polypeptide reads, in one-letter code: Lipoyl synthase (321 aa).

Positions 68, 73, 79, 94, 98, 101, and 308 each coordinate [4Fe-4S] cluster. One can recognise a Radical SAM core domain in the interval 80–297 (FNHGTATFMI…KEEAMAMGFT (218 aa)).

Belongs to the radical SAM superfamily. Lipoyl synthase family. The cofactor is [4Fe-4S] cluster.

The protein localises to the cytoplasm. The catalysed reaction is [[Fe-S] cluster scaffold protein carrying a second [4Fe-4S](2+) cluster] + N(6)-octanoyl-L-lysyl-[protein] + 2 oxidized [2Fe-2S]-[ferredoxin] + 2 S-adenosyl-L-methionine + 4 H(+) = [[Fe-S] cluster scaffold protein] + N(6)-[(R)-dihydrolipoyl]-L-lysyl-[protein] + 4 Fe(3+) + 2 hydrogen sulfide + 2 5'-deoxyadenosine + 2 L-methionine + 2 reduced [2Fe-2S]-[ferredoxin]. Its pathway is protein modification; protein lipoylation via endogenous pathway; protein N(6)-(lipoyl)lysine from octanoyl-[acyl-carrier-protein]: step 2/2. Its function is as follows. Catalyzes the radical-mediated insertion of two sulfur atoms into the C-6 and C-8 positions of the octanoyl moiety bound to the lipoyl domains of lipoate-dependent enzymes, thereby converting the octanoylated domains into lipoylated derivatives. In Serratia proteamaculans (strain 568), this protein is Lipoyl synthase.